Here is a 138-residue protein sequence, read N- to C-terminus: Large ribosomal subunit protein uL16 (138 aa).

The span at 1–19 shows a compositional bias: basic residues; sequence MLIPRKVAHRKQHHPKRTG. The tract at residues 1–22 is disordered; sequence MLIPRKVAHRKQHHPKRTGAAK.

Belongs to the universal ribosomal protein uL16 family. In terms of assembly, part of the 50S ribosomal subunit.

Functionally, binds 23S rRNA and is also seen to make contacts with the A and possibly P site tRNAs. This Parafrankia sp. (strain EAN1pec) protein is Large ribosomal subunit protein uL16.